The sequence spans 235 residues: MPCKRCRPSVYSLSYIKRGKTRNYLYPIWSPYAYYLYCYKYRITLREKMLPRCYKSITYKEEEDLTLQPRSCLQCSESLVGLQEGKSTEQGNHDQLKELYSAGNLTVLATDPLLHQDPVQLDFHFRLTSQTSAHWHGLLCDRRLFLDIPYQALDQGNRESLTATLEYVEEKTNVDSVFVNFQNDRNDRGALLRAFSYMGFEVVRPDHPALPPLDNVIFMVYPLERDVGHLPSEPP.

A phosphoserine mark is found at Ser-9 and Ser-12.

The protein belongs to the ODC antizyme family. Interacts with ODC1 and thereby sterically blocks ODC homodimerization. Interacts with AZIN2; this interaction disrupts the interaction between the antizyme and ODC1. Interacts with GGN. As to expression, testis specific.

The protein localises to the nucleus. Its subcellular location is the cytoplasm. Ornithine decarboxylase (ODC) antizyme protein that negatively regulates ODC activity and intracellular polyamine biosynthesis and uptake in response to increased intracellular polyamine levels. Binds to ODC monomers, inhibiting the assembly of the functional ODC homodimers. Does not target the ODC monomers for degradation, which allows a protein synthesis-independent restoration of ODC activity. Stabilizes AZIN2 by interfering with its ubiquitination. Involved in the translocation of AZNI2 from ER-Golgi intermediate compartment (ERGIC) to the cytosol. Probably plays a key role in spermatogenesis by regulating the intracellular concentration of polyamines in haploid germ cells. The sequence is that of Ornithine decarboxylase antizyme 3 (OAZ3) from Homo sapiens (Human).